The chain runs to 66 residues: Stress-associated endoplasmic reticulum protein 1 (66 aa).

Residues 1–33 are disordered; it reads MVAKQRIRMANEKHSKNITQRGNVAKTSRNAPG. The Cytoplasmic segment spans residues 1 to 38; that stretch reads MVAKQRIRMANEKHSKNITQRGNVAKTSRNAPGEKASV. Polar residues predominate over residues 17–30; it reads NITQRGNVAKTSRN. The chain crosses the membrane as a helical span at residues 39 to 59; sequence GPWLLALFIFVVCGSAIFQII. Residues 60 to 66 lie on the Extracellular side of the membrane; sequence QSIRMGM.

Belongs to the RAMP4 family. As to quaternary structure, interacts with SEC61B, SEC61A1 and the SEC61 complex. Interacts with CANX.

It localises to the membrane. Its subcellular location is the endoplasmic reticulum membrane. Its function is as follows. Interacts with target proteins during their translocation into the lumen of the endoplasmic reticulum. Protects unfolded target proteins against degradation during ER stress. May facilitate glycosylation of target proteins after termination of ER stress. May modulate the use of N-glycosylation sites on target proteins. This is Stress-associated endoplasmic reticulum protein 1 (SERP1) from Pongo abelii (Sumatran orangutan).